A 469-amino-acid polypeptide reads, in one-letter code: Glutamine synthetase (469 aa).

Positions 14-98 (NDVKYVDLRF…VVCDVLEPTT (85 aa)) constitute a GS beta-grasp domain. The GS catalytic domain occupies 106 to 469 (PRGIAKKAMA…PVEFEMYYSV (364 aa)). Residues Glu131 and Glu133 each contribute to the Mg(2+) site. Glu209 contributes to the ATP binding site. Mg(2+) contacts are provided by Glu214 and Glu221. Residues 265–266 (NG) and Gly266 contribute to the L-glutamate site. His270 is a Mg(2+) binding site. Residues 272-274 (HQS) and Ser274 contribute to the ATP site. The L-glutamate site is built by Arg322, Glu328, and Arg340. Positions 340, 345, and 353 each coordinate ATP. Mg(2+) is bound at residue Glu358. Arg360 lines the L-glutamate pocket. Residue Tyr398 is modified to O-AMP-tyrosine.

The protein belongs to the glutamine synthetase family. As to quaternary structure, oligomer of 12 subunits arranged in the form of two hexameric ring. Mg(2+) serves as cofactor.

The protein localises to the cytoplasm. It catalyses the reaction L-glutamate + NH4(+) + ATP = L-glutamine + ADP + phosphate + H(+). The activity of this enzyme could be controlled by adenylation under conditions of abundant glutamine. Functionally, catalyzes the ATP-dependent biosynthesis of glutamine from glutamate and ammonia. The polypeptide is Glutamine synthetase (Azorhizobium caulinodans (strain ATCC 43989 / DSM 5975 / JCM 20966 / LMG 6465 / NBRC 14845 / NCIMB 13405 / ORS 571)).